The chain runs to 953 residues: Valine--tRNA ligase (953 aa).

A 'HIGH' region motif is present at residues 42–52 (PNVTGSLHMGH). The short motif at 554–558 (KMSKS) is the 'KMSKS' region element. An ATP-binding site is contributed by Lys-557. Residues 884-953 (LIDKDAELAR…EAQKETIAAL (70 aa)) are a coiled coil.

The protein belongs to the class-I aminoacyl-tRNA synthetase family. ValS type 1 subfamily. As to quaternary structure, monomer.

Its subcellular location is the cytoplasm. The catalysed reaction is tRNA(Val) + L-valine + ATP = L-valyl-tRNA(Val) + AMP + diphosphate. Functionally, catalyzes the attachment of valine to tRNA(Val). As ValRS can inadvertently accommodate and process structurally similar amino acids such as threonine, to avoid such errors, it has a 'posttransfer' editing activity that hydrolyzes mischarged Thr-tRNA(Val) in a tRNA-dependent manner. In Photobacterium profundum (strain SS9), this protein is Valine--tRNA ligase.